The following is a 125-amino-acid chain: Large ribosomal subunit protein bL12 (125 aa).

The protein belongs to the bacterial ribosomal protein bL12 family. As to quaternary structure, homodimer. Part of the ribosomal stalk of the 50S ribosomal subunit. Forms a multimeric L10(L12)X complex, where L10 forms an elongated spine to which 2 to 4 L12 dimers bind in a sequential fashion. Binds GTP-bound translation factors.

Forms part of the ribosomal stalk which helps the ribosome interact with GTP-bound translation factors. Is thus essential for accurate translation. This is Large ribosomal subunit protein bL12 from Porphyromonas gingivalis (strain ATCC 33277 / DSM 20709 / CIP 103683 / JCM 12257 / NCTC 11834 / 2561).